The chain runs to 246 residues: Large ribosomal subunit protein uL3 (246 aa).

Disordered stretches follow at residues 140–162 and 215–246; these read SHRS…NKKM and DVPL…EENA. At Gln-151 the chain carries N5-methylglutamine. Low complexity predominate over residues 234–246; that stretch reads EAAPEAPASEENA.

The protein belongs to the universal ribosomal protein uL3 family. Part of the 50S ribosomal subunit. Forms a cluster with proteins L14 and L19. In terms of processing, methylated by PrmB.

One of the primary rRNA binding proteins, it binds directly near the 3'-end of the 23S rRNA, where it nucleates assembly of the 50S subunit. This chain is Large ribosomal subunit protein uL3, found in Methylorubrum populi (strain ATCC BAA-705 / NCIMB 13946 / BJ001) (Methylobacterium populi).